The chain runs to 235 residues: Pyridoxine 5'-phosphate synthase (235 aa).

3-amino-2-oxopropyl phosphate is bound at residue Asn-6. 1-deoxy-D-xylulose 5-phosphate is bound at residue Asp-8–His-9. Arg-17 is a binding site for 3-amino-2-oxopropyl phosphate. Residue His-42 is the Proton acceptor of the active site. The 1-deoxy-D-xylulose 5-phosphate site is built by Arg-44 and His-49. Glu-69 serves as the catalytic Proton acceptor. Residue Thr-99 participates in 1-deoxy-D-xylulose 5-phosphate binding. His-189 serves as the catalytic Proton donor. Residues Gly-190 and Gly-211–His-212 contribute to the 3-amino-2-oxopropyl phosphate site.

The protein belongs to the PNP synthase family. Homooctamer; tetramer of dimers.

Its subcellular location is the cytoplasm. It catalyses the reaction 3-amino-2-oxopropyl phosphate + 1-deoxy-D-xylulose 5-phosphate = pyridoxine 5'-phosphate + phosphate + 2 H2O + H(+). It participates in cofactor biosynthesis; pyridoxine 5'-phosphate biosynthesis; pyridoxine 5'-phosphate from D-erythrose 4-phosphate: step 5/5. Catalyzes the complicated ring closure reaction between the two acyclic compounds 1-deoxy-D-xylulose-5-phosphate (DXP) and 3-amino-2-oxopropyl phosphate (1-amino-acetone-3-phosphate or AAP) to form pyridoxine 5'-phosphate (PNP) and inorganic phosphate. This Chlorobium chlorochromatii (strain CaD3) protein is Pyridoxine 5'-phosphate synthase.